A 135-amino-acid polypeptide reads, in one-letter code: RxLR effector protein Avh5 (135 aa).

Residues 1 to 19 (MRLQFFLVMAVATLATISA) form the signal peptide. The RxLR-dEER motif lies at 43-71 (RFLRTADTDIVYEPKVHNPGKKQVFIEDK). Residues K81, K83, and K84 each contribute to the a 1,2-diacyl-sn-glycero-3-phospho-(1D-myo-inositol-3-phosphate) site.

It belongs to the RxLR effector family.

The protein resides in the secreted. It localises to the host cell. Functionally, effector that suppresses plant defense responses during the early stages of pathogen infection. Suppresses cell death induced by effectors and PAMPs in plant hosts. This is RxLR effector protein Avh5 from Phytophthora sojae (Soybean stem and root rot agent).